Consider the following 118-residue polypeptide: Large ribosomal subunit protein uL18 (118 aa).

The tract at residues 1–22 (MISKPDKNKLRQKRHRRVRGKL) is disordered. The span at 10–20 (LRQKRHRRVRG) shows a compositional bias: basic residues.

The protein belongs to the universal ribosomal protein uL18 family. As to quaternary structure, part of the 50S ribosomal subunit; part of the 5S rRNA/L5/L18/L25 subcomplex. Contacts the 5S and 23S rRNAs.

In terms of biological role, this is one of the proteins that bind and probably mediate the attachment of the 5S RNA into the large ribosomal subunit, where it forms part of the central protuberance. The sequence is that of Large ribosomal subunit protein uL18 from Streptococcus thermophilus (strain ATCC BAA-491 / LMD-9).